The following is a 634-amino-acid chain: DNA-directed RNA polymerase subunit gamma (634 aa).

Positions 74, 76, 89, and 92 each coordinate Zn(2+). Asp471, Asp473, and Asp475 together coordinate Mg(2+).

This sequence belongs to the RNA polymerase beta' chain family. RpoC1 subfamily. As to quaternary structure, in cyanobacteria the RNAP catalytic core is composed of 2 alpha, 1 beta, 1 beta', 1 gamma and 1 omega subunit. When a sigma factor is associated with the core the holoenzyme is formed, which can initiate transcription. Requires Mg(2+) as cofactor. It depends on Zn(2+) as a cofactor.

It carries out the reaction RNA(n) + a ribonucleoside 5'-triphosphate = RNA(n+1) + diphosphate. Its function is as follows. DNA-dependent RNA polymerase catalyzes the transcription of DNA into RNA using the four ribonucleoside triphosphates as substrates. This Synechococcus sp. (strain CC9902) protein is DNA-directed RNA polymerase subunit gamma.